We begin with the raw amino-acid sequence, 216 residues long: Ras-related protein YPTC6 (216 aa).

19–26 is a GTP binding site; sequence GDSGVGKS. An Effector region motif is present at residues 41–49; that stretch reads SKSTIGVEF. Residues 67–71 and 125–128 contribute to the GTP site; these read DTAGQ and NKSD. Residues Cys214 and Cys215 are each lipidated (S-geranylgeranyl cysteine).

The protein belongs to the small GTPase superfamily. Rab family.

Its subcellular location is the cell membrane. This chain is Ras-related protein YPTC6 (YPTC6), found in Chlamydomonas reinhardtii (Chlamydomonas smithii).